Reading from the N-terminus, the 543-residue chain is Cyclohexanone 1,2-monooxygenase (543 aa).

Positions 16, 37, 46, 57, 63, and 110 each coordinate FAD.

Belongs to the FAD-binding monooxygenase family. Requires FAD as cofactor.

It carries out the reaction cyclohexanone + NADPH + O2 + H(+) = hexano-6-lactone + NADP(+) + H2O. This chain is Cyclohexanone 1,2-monooxygenase, found in Acinetobacter sp.